A 114-amino-acid polypeptide reads, in one-letter code: Cytochrome c oxidase subunit 7A2-like, mitochondrial (114 aa).

The transit peptide at 1–55 (MYYKFSGFTQKLAGAWASEAYSPQGLKPVVSTEAPPIIFATPTKLTSDSTVYDYA) directs the protein to the mitochondrion. Lys-69 bears the N6-acetyllysine mark. A helical membrane pass occupies residues 82-107 (PDQMLYRTTMALTVGGTIYCLIALYM).

Belongs to the cytochrome c oxidase VIIa family. In terms of assembly, interacts with the mitochondrial respiratory complexes III (CIII) and IV (CIV), promoting their association.

The protein localises to the mitochondrion inner membrane. In terms of biological role, assembly factor that mediates the formation of some mitochondrial respiratory supercomplexes (respirasomes), thereby promoting oxidative phosphorylation and energy metabolism. Acts as a molecular adapter that associates with both mitochondrial respiratory complexes III (CIII) and IV (CIV), promoting their association. Mediates the formation of various mitochondrial respiratory supercomplexes, such as MCIII(2)IV(2), composed of two CIII and two CIV, and the CS-respirasome (MCI(1)III(2)IV(2)), composed of one CI, two CIII and two CIV. Not involved in the formation of the canonical respirasome (MCI(1)III(2)IV(1)), composed of one CI, two CIII and one CIV. The formation of different respirasomes is important for cell adaptation to oxygen conditions and prevent metabolic exhaustion: supercomplexes mediated by COX7A2L/SCAF1 are required to maintain oxidative phosphorylation upon low oxygen conditions and promote metabolic rewiring toward glycolysis. This is Cytochrome c oxidase subunit 7A2-like, mitochondrial from Homo sapiens (Human).